The primary structure comprises 365 residues: Testis-specific serine/threonine-protein kinase 1 (365 aa).

Residues 12-272 form the Protein kinase domain; that stretch reads YIMGINLGEG…IDEILNHCWV (261 aa). Residues 18–26 and lysine 41 each bind ATP; that span reads LGEGSYAKV. The active-site Proton acceptor is the aspartate 136. Threonine 174 bears the Phosphothreonine mark. Residues 282 to 365 are disordered; that stretch reads GAINKEGESS…HPQQPSETHT (84 aa). Basic and acidic residues predominate over residues 303 to 330; it reads GADKKSATKLEPREEARSEARSESKPQE. Over residues 331 to 347 the composition is skewed to polar residues; that stretch reads DTLQVVRQSENVGLSSE.

It belongs to the protein kinase superfamily. CAMK Ser/Thr protein kinase family. Interacts with TSSK2. Interacts with HSP90; this interaction stabilizes TSSK1. The cofactor is Mg(2+). Autophosphorylated. Post-translationally, ubiquitinated; HSP90 activity negatively regulates ubiquitination and degradation. In terms of tissue distribution, testis-specific. Expressed only in postmeiotic spermatids at the final stages of cytodifferentiation in the seminiferous tubules (at protein level). Not detected in released sperms in the lumen of the seminiferous tubules and the epididymis.

Its subcellular location is the cytoplasm. The protein localises to the cytoplasmic vesicle. It localises to the secretory vesicle. It is found in the acrosome. The protein resides in the cell projection. Its subcellular location is the cilium. The protein localises to the flagellum. It catalyses the reaction L-seryl-[protein] + ATP = O-phospho-L-seryl-[protein] + ADP + H(+). The catalysed reaction is L-threonyl-[protein] + ATP = O-phospho-L-threonyl-[protein] + ADP + H(+). Activated by phosphorylation on Thr-174, potentially by autophosphorylation. Functionally, testis-specific serine/threonine-protein kinase required during spermatid development. Phosphorylates 'Ser-281' of TSKS. Involved in the late stages of spermatogenesis, during the reconstruction of the cytoplasm. During spermatogenesis, required for the transformation of a ring-shaped structure around the base of the flagellum originating from the chromatoid body. This is Testis-specific serine/threonine-protein kinase 1 (Tssk1b) from Mus musculus (Mouse).